Reading from the N-terminus, the 336-residue chain is MLQSLAGSSCVRLVERHRSAWCFGFLVLGYLLYLVFGAVVFSSVELPYEDLLRQELRKLKRRFLEEHECLSEPQLEQFLGRVLEASNYGVSVLSNASGNWNWDFTSALFFASTVLSTTGYGHTVPLSDGGKAFCIIYSVIGIPFTLLFLTAVVQRVTVHVTRRPVLYFHIRWGFSKQVVAIVHAVLLGFVTVSCFFFIPAAVFSVLEDDWNFLESFYFCFISLSTIGLGDYVPGEGYNQKFRELYKIGITCYLLLGLIAMLVVLETFCELHELKKFRKMFYVKKDKDEDLVHIMEHDQLSFSSVTEQVAGLKEEQKQSEPFVASQSPPYEDGSADH.

The Cytoplasmic portion of the chain corresponds to 1–20 (MLQSLAGSSCVRLVERHRSA). Residues 21 to 41 (WCFGFLVLGYLLYLVFGAVVF) traverse the membrane as a helical segment. Topologically, residues 42-103 (SSVELPYEDL…SNASGNWNWD (62 aa)) are extracellular. Asn-95 is a glycosylation site (N-linked (GlcNAc...) asparagine). The segment at residues 104–116 (FTSALFFASTVLS) is an intramembrane region (helical). An intramembrane segment occupies 117–122 (TTGYGH). The segment at 117–122 (TTGYGH) is selectivity filter 1. Topologically, residues 123–132 (TVPLSDGGKA) are extracellular. A helical membrane pass occupies residues 133-156 (FCIIYSVIGIPFTLLFLTAVVQRV). The Cytoplasmic portion of the chain corresponds to 157–181 (TVHVTRRPVLYFHIRWGFSKQVVAI). Residues 182 to 202 (VHAVLLGFVTVSCFFFIPAAV) form a helical membrane-spanning segment. The Extracellular portion of the chain corresponds to 203–211 (FSVLEDDWN). The segment at residues 212–224 (FLESFYFCFISLS) is an intramembrane region (helical). The interval 225 to 230 (TIGLGD) is selectivity filter 2. Residues 225 to 231 (TIGLGDY) lie within the membrane without spanning it. Residues 232 to 243 (VPGEGYNQKFRE) are Extracellular-facing. The helical transmembrane segment at 244 to 267 (LYKIGITCYLLLGLIAMLVVLETF) threads the bilayer. Residues 268-336 (CELHELKKFR…PPYEDGSADH (69 aa)) are Cytoplasmic-facing. Residue Lys-274 forms a Glycyl lysine isopeptide (Lys-Gly) (interchain with G-Cter in SUMO) linkage. The important for intracellular retention in recycling endosomes stretch occupies residues 293 to 299 (IMEHDQL). A disordered region spans residues 310-336 (GLKEEQKQSEPFVASQSPPYEDGSADH). The residue at position 326 (Ser-326) is a Phosphoserine.

The protein belongs to the two pore domain potassium channel (TC 1.A.1.8) family. As to quaternary structure, homodimer; disulfide-linked. Heterodimer with KCNK2; disulfide-linked. In astrocytes, forms mostly heterodimeric potassium channels with KCNK2, with only a minor proportion of functional channels containing homodimeric KCNK1. Interacts with KCNK3 and KCNK9, forming functional heterodimeric channels. Interacts with GNG4. Identified in a complex with PSD and ARF6; interacts only with PSD that is bound to ARF6. Interacts with UBE2I. In terms of processing, sumoylation is controversial. Sumoylated by UBE2I. Not sumoylated when expressed in xenopus oocytes or mammalian cells. Sumoylation inactivates the channel, but does not interfere with expression at the cell membrane. Sumoylation of a single subunit is sufficient to silence the dimeric channel. Sumoylation of KCNK1 is sufficient to silence heterodimeric channels formed by KCNK1 and KCNK3 or KCNK9. Desumoylated by SENP1; this activates the channel. Desumoylated by SENP1; this strongly increases halothane-mediated activation of heterodimeric channels formed with KCNK9. SENP1 treatment has no effect. Detected in spiral ganglion neurons. Detected in hippocampus CA1 and CA1 regions and in the molecular layer of the dentate gyrus. Detected on hippocampus astrocytes. Highly expressed in the stria vascularis in the cochlea. Detected in pancreas islet beta cells. Detected in kidney, at brush border membranes in proximal tubules and in cytoplasmic structures in distal convoluted tubules, thick ascending limbs and collecting ducts (at protein level). Widely expressed. Detected in spiral ganglion cells. Highest expression in brain, kidney, thyroid, salivary gland, adrenal gland, prostate, epididymis, uterus, placenta, colon and jejunum. Moderate expression in eyes, pituitary, pancreas, smooth muscle, testis and ovary. Very low levels in lung, aorta, liver, heart, skeletal muscle, thymus and spleen. In the brain, highest expression in cerebellar granule cells, brainstem, hippocampus and cerebral cortex.

It is found in the cell membrane. It localises to the recycling endosome. The protein localises to the apical cell membrane. The protein resides in the cytoplasmic vesicle. Its subcellular location is the perikaryon. It is found in the cell projection. It localises to the dendrite. The protein localises to the synaptic cell membrane. It catalyses the reaction K(+)(in) = K(+)(out). The enzyme catalyses NH4(+)(in) = NH4(+)(out). It carries out the reaction Na(+)(in) = Na(+)(out). The catalysed reaction is Rb(+)(in) = Rb(+)(out). It catalyses the reaction Cs(+)(in) = Cs(+)(out). The enzyme catalyses Li(+)(in) = Li(+)(out). It carries out the reaction L-glutamate(out) = L-glutamate(in). The catalysed reaction is chloride(in) = chloride(out). Its activity is regulated as follows. Inhibited by quinine, quinidine, barium, and internal acidification. Functionally, ion channel that contributes to passive transmembrane potassium transport and to the regulation of the resting membrane potential in brain astrocytes, but also in kidney and in other tissues. Forms dimeric channels through which potassium ions pass in accordance with their electrochemical gradient. The channel is selective for K(+) ions at physiological potassium concentrations and at neutral pH, but becomes permeable to Na(+) at subphysiological K(+) levels and upon acidification of the extracellular medium. The homodimer has very low potassium channel activity, when expressed in heterologous systems, and can function as weakly inward rectifying potassium channel. Channel activity is modulated by activation of serotonin receptors. Heterodimeric channels containing KCNK1 and KCNK2 have much higher activity, and may represent the predominant form in astrocytes. Heterodimeric channels containing KCNK1 and KCNK3 or KCNK9 have much higher activity. Heterodimeric channels formed by KCNK1 and KCNK9 may contribute to halothane-sensitive currents. Mediates outward rectifying potassium currents in dentate gyrus granule cells and contributes to the regulation of their resting membrane potential. Contributes to the regulation of action potential firing in dentate gyrus granule cells and down-regulates their intrinsic excitability. In astrocytes, the heterodimer formed by KCNK1 and KCNK2 is required for rapid glutamate release in response to activation of G-protein coupled receptors, such as F2R and CNR1. Required for normal ion and water transport in the kidney. Contributes to the regulation of the resting membrane potential of pancreatic beta cells. The low channel activity of homodimeric KCNK1 may be due to sumoylation. The low channel activity may be due to rapid internalization from the cell membrane and retention in recycling endosomes. Permeable to monovalent cations with ion selectivity for K(+) &gt; Rb(+) &gt;&gt; NH4(+) &gt;&gt; Cs(+) = Na(+) = Li(+). The protein is Potassium channel subfamily K member 1 (Kcnk1) of Mus musculus (Mouse).